The primary structure comprises 295 residues: Forkhead box protein N5 (295 aa).

Positions 119–146 (STVEDSEDEAPTSCSDLMTDDDNDDSYN) are disordered. A DNA-binding region (fork-head) is located at residues 178–275 (RPPLNYCNLI…NEMHALSDDL (98 aa)).

In terms of tissue distribution, ubiquitously expressed in early cleavage stage and gastrula stage embryos.

It is found in the nucleus. The sequence is that of Forkhead box protein N5 from Xenopus laevis (African clawed frog).